We begin with the raw amino-acid sequence, 1400 residues long: Clustered mitochondria protein homolog (1400 aa).

3 disordered regions span residues 1–39 (MVSKTDDIPASVPNCSPADFARDGETANSKGTTSKKEAS), 56–78 (GHDQAEEADSKQDGSGDADQAED), and 212–243 (GDTGKRKKKGSELEQIDCTPPEHILPGSKERP). Over residues 56-69 (GHDQAEEADSKQDG) the composition is skewed to basic and acidic residues. Residues 380–622 (RAEDAYTSRL…RTFPPDLNFL (243 aa)) form the Clu domain. A disordered region spans residues 684–741 (AALQDSNAAGAGSENKPLALESCDGTPDSPTSSESTLTPEDSEATTVSENSSAENQEA). Over residues 707–722 (DGTPDSPTSSESTLTP) the composition is skewed to low complexity. Positions 727 to 741 (ATTVSENSSAENQEA) are enriched in polar residues. 4 TPR repeats span residues 1088-1121 (AFHFFQSGQAKVQQGFLKEGCELINEALNLFNNV), 1130-1163 (CACLRLLARLNYIMGDHPEALSNQQKAVLMSERV), 1172-1205 (IQEYMHLALYCFANGQLSTALKLLYRARYLMLVV), and 1214-1247 (ALLDSNIGLVLHGVMEYDLSLRFLENALAINTKY). Over residues 1377–1388 (QDSGKIQEQQGS) the composition is skewed to polar residues. Residues 1377–1400 (QDSGKIQEQQGSHLELDDKLPVDD) are disordered. The segment covering 1390 to 1400 (LELDDKLPVDD) has biased composition (basic and acidic residues).

The protein belongs to the CLU family.

The protein localises to the cytoplasm. Its function is as follows. mRNA-binding protein involved in proper cytoplasmic distribution of mitochondria. The protein is Clustered mitochondria protein homolog of Danio rerio (Zebrafish).